The sequence spans 190 residues: dCTP deaminase (190 aa).

113–118 (KSTYAR) is a dCTP binding site. E139 serves as the catalytic Proton donor/acceptor. DCTP-binding residues include Q158, Y172, K181, and Q182.

The protein belongs to the dCTP deaminase family. As to quaternary structure, homotrimer.

The catalysed reaction is dCTP + H2O + H(+) = dUTP + NH4(+). It participates in pyrimidine metabolism; dUMP biosynthesis; dUMP from dCTP (dUTP route): step 1/2. Its function is as follows. Catalyzes the deamination of dCTP to dUTP. The sequence is that of dCTP deaminase from Chlamydia trachomatis serovar L2 (strain ATCC VR-902B / DSM 19102 / 434/Bu).